The chain runs to 218 residues: Superoxide dismutase [Mn], mitochondrial (218 aa).

The N-terminal 21 residues, 1–21 (MLRFLSKNSVAAIRNVSIARG), are a transit peptide targeting the mitochondrion. His50 and His96 together coordinate Mn(2+). A Phosphoserine modification is found at Ser129. Asp181 and His185 together coordinate Mn(2+).

Belongs to the iron/manganese superoxide dismutase family. Homodimer. Requires Mn(2+) as cofactor.

Its subcellular location is the mitochondrion matrix. The catalysed reaction is 2 superoxide + 2 H(+) = H2O2 + O2. Destroys superoxide anion radicals which are normally produced within the cells and which are toxic to biological systems. This Schizosaccharomyces pombe (strain 972 / ATCC 24843) (Fission yeast) protein is Superoxide dismutase [Mn], mitochondrial (sod2).